Consider the following 272-residue polypeptide: 3-methyl-2-oxobutanoate hydroxymethyltransferase (272 aa).

Residues Asp51 and Asp90 each contribute to the Mg(2+) site. Residues 51-52, Asp90, and Lys118 contribute to the 3-methyl-2-oxobutanoate site; that span reads DS. Glu120 serves as a coordination point for Mg(2+). The Proton acceptor role is filled by Glu187.

It belongs to the PanB family. As to quaternary structure, homodecamer; pentamer of dimers. Requires Mg(2+) as cofactor.

It is found in the cytoplasm. It carries out the reaction 3-methyl-2-oxobutanoate + (6R)-5,10-methylene-5,6,7,8-tetrahydrofolate + H2O = 2-dehydropantoate + (6S)-5,6,7,8-tetrahydrofolate. The protein operates within cofactor biosynthesis; (R)-pantothenate biosynthesis; (R)-pantoate from 3-methyl-2-oxobutanoate: step 1/2. Functionally, catalyzes the reversible reaction in which hydroxymethyl group from 5,10-methylenetetrahydrofolate is transferred onto alpha-ketoisovalerate to form ketopantoate. In Xylella fastidiosa (strain 9a5c), this protein is 3-methyl-2-oxobutanoate hydroxymethyltransferase.